The sequence spans 430 residues: Transcription factor E2F1 (430 aa).

Residues 62–103 (ATPQAPRPAPSAPRPALGRPPVKRRLDLETDHQYLAGSSGPF) form a cyclin A:CDK2 binding region. Residues 84–186 (KRRLDLETDH…KKSKNHIQWL (103 aa)) are interaction with BIRC2/c-IAP1. The segment at 95-123 (YLAGSSGPFRGRGRHPGKGVKSPGEKSRY) is disordered. The DNA-binding element occupies 105-189 (GRGRHPGKGV…KNHIQWLGSH (85 aa)). Residues K112, K115, and K120 each carry the N6-acetyllysine modification. A leucine-zipper region spans residues 148-169 (LNWAAEVLKVQKRRIYDITNVL). Positions 153–189 (EVLKVQKRRIYDITNVLEGIQLIAKKSKNHIQWLGSH) match the DEF box motif. N6-methyllysine; by SETD7 is present on K180. Residues 187–375 (GSHTMVGIGK…QLSPLVAADS (189 aa)) are required for interaction with TRIM28. The tract at residues 190 to 279 (TMVGIGKRLE…AVDSSETFQI (90 aa)) is dimerization. The tract at residues 294–340 (PEESADGISPGKTSCQETSSGEDRTADSGPAGPPPSPPSTSPALDPS) is disordered. The span at 324-333 (AGPPPSPPST) shows a compositional bias: pro residues. The transactivation stretch occupies residues 361–430 (PMEEDQLSPL…DFGDLTPLDF (70 aa)). Residues S368 and S396 each carry the phosphoserine modification. An RB1 binding region spans residues 402–419 (LDYHFGLEEGEGIRDLFD). At T426 the chain carries Phosphothreonine.

It belongs to the E2F/DP family. As to quaternary structure, component of the DRTF1/E2F transcription factor complex. Forms heterodimers with DP family members. The E2F1 complex binds specifically hypophosphorylated RB1, the interaction represses E2F1-driven transcription. During the cell cycle, RB1 becomes phosphorylated in mid-to-late G1 phase, detaches from the DRTF1/E2F complex, rendering E2F transcriptionally active. Interacts with TRRAP, which probably mediates its interaction with histone acetyltransferase complexes, leading to transcription activation. Binds TOPBP1 and EAPP. Interacts with ARID3A. Interacts with TRIM28; the interaction inhibits E2F1 acetylation through recruiting HDAC1 and represses its transcriptional activity. Interaction with KAT2B; the interaction acetylates E2F1 enhancing its DNA-binding and transcriptional activity. Interacts with BIRC2/c-IAP1 (via BIR domains). The complex TFDP1:E2F1 interacts with CEBPA; the interaction prevents CEBPA binding to target genes promoters and represses its transcriptional activity. Interacts with RRP1B. Interacts with HCFC1. Interacts with KMT2E; the interaction is probably indirect and is mediated via HCFC1. Interacts with DCAF5 and L3MBTL3; the interaction requires methylation at Lys-180 and is necessary to target E2F1 for ubiquitination by the CRL4-DCAF5 E3 ubiquitin ligase complex. Post-translationally, phosphorylated by CDK2 and cyclin A-CDK2 in the S-phase. Phosphorylation by CHEK2 stabilizes E2F1 upon DNA damage and regulates its effect on transcription and apoptosis. Phosphorylation at Ser-396 by GSK3B promotes interaction with USP11, leading to its deubiquitination and stabilization. Ubiquitinated via 'Lys-63'-linked ubiquitin, leading to its degradation. Deubiquitinated by USP11 following phosphorylation by GSK3B, promoting its stability. In terms of processing, acetylation stimulates DNA-binding. Enhanced under stress conditions such as DNA damage and inhibited by retinoblastoma protein RB1. Regulated by KAP1/TRIM28 which recruits HDAC1 to E2F1 resulting in deacetylation. Acetylated by P/CAF/KAT2B. Post-translationally, methylation at Lys-180 by SETD7 promotes E2F1 ubiquitin-dependent proteasomal degradation.

The protein resides in the nucleus. With respect to regulation, BIRC2/c-IAP1 stimulates its transcriptional activity. Its function is as follows. Transcription activator that binds DNA cooperatively with DP proteins through the E2 recognition site, 5'-TTTC[CG]CGC-3' found in the promoter region of a number of genes whose products are involved in cell cycle regulation or in DNA replication. The DRTF1/E2F complex functions in the control of cell-cycle progression from G1 to S phase. E2F1 binds preferentially RB1 in a cell-cycle dependent manner. It can mediate both cell proliferation and TP53/p53-dependent apoptosis. Blocks adipocyte differentiation by binding to specific promoters repressing CEBPA binding to its target gene promoters. Directly activates transcription of PEG10. Positively regulates transcription of RRP1B. This Mus musculus (Mouse) protein is Transcription factor E2F1.